The sequence spans 319 residues: MKAMNKVWVIGDASVDLVPEKQNSYLKCPGGASANVGVCVARLGGECGFIGCLGDDDAGRFLRQVFQDNGVDVTFLRLDADLTSAVLIVNLTADGERSFTYLVHPGADTYVSPQDLPPFRQYEWFYFSSIGLTDRPAREACLEGARRMREAGGYVLFDVNLRSKMWGNTDEIPELIARSAALASICKVSADELCQLSGASHWQDARYYLRDLGCDTTIISLGADGALLITAEGEFHFPAPRVDVVDTTGAGDAFVGGLLFTLSRANCWDHALLAEAISNANACGAMAVTAKGAMTALPFPDQLNTFLSSHSLAQAMTVK.

5-amino-1-(beta-D-ribosyl)imidazole is bound by residues D16, G31, and Y101. 158 to 160 (DVN) contacts ATP. R162 is a 5-amino-1-(beta-D-ribosyl)imidazole binding site. A180, A181, and A183 together coordinate K(+). 2 residues coordinate ATP: K187 and E192. Residue G213 coordinates K(+). 220–225 (SLGADG) contributes to the ATP binding site. D246 and T248 together coordinate K(+). Position 252 (D252) interacts with 5-amino-1-(beta-D-ribosyl)imidazole. The active-site Proton acceptor is the D252. N281 contacts ATP. 3 residues coordinate K(+): A287, A290, and G292.

Belongs to the carbohydrate kinase PfkB family. In terms of assembly, homodimer.

It catalyses the reaction 5-amino-1-(beta-D-ribosyl)imidazole + ATP = 5-amino-1-(5-phospho-beta-D-ribosyl)imidazole + ADP + H(+). Its activity is regulated as follows. Potassium may regulate kinase activity. In terms of biological role, phosphorylates 5-amino-1-(beta-D-ribosyl)imidazole (AIRs) to form 5-amino-1-(5-phospho-beta-D-ribosyl)imidazole (AIR), an important intermediate in the purine and thiamine biosynthetic pathways. It allows the use of exogenous aminoimidazole riboside (AIRs) to satisfy the cellular requirement for purines and thiamine. The sequence is that of Aminoimidazole riboside kinase from Salmonella typhimurium (strain LT2 / SGSC1412 / ATCC 700720).